A 215-amino-acid chain; its full sequence is 3-isopropylmalate dehydratase small subunit (215 aa).

Belongs to the LeuD family. LeuD type 1 subfamily. In terms of assembly, heterodimer of LeuC and LeuD.

The enzyme catalyses (2R,3S)-3-isopropylmalate = (2S)-2-isopropylmalate. Its pathway is amino-acid biosynthesis; L-leucine biosynthesis; L-leucine from 3-methyl-2-oxobutanoate: step 2/4. In terms of biological role, catalyzes the isomerization between 2-isopropylmalate and 3-isopropylmalate, via the formation of 2-isopropylmaleate. This chain is 3-isopropylmalate dehydratase small subunit, found in Xanthomonas campestris pv. campestris (strain 8004).